The chain runs to 184 residues: NADH-quinone oxidoreductase subunit B (184 aa).

C37, C38, C103, and C132 together coordinate [4Fe-4S] cluster.

This sequence belongs to the complex I 20 kDa subunit family. In terms of assembly, NDH-1 is composed of 14 different subunits. Subunits NuoB, C, D, E, F, and G constitute the peripheral sector of the complex. [4Fe-4S] cluster is required as a cofactor.

The protein resides in the cell membrane. It catalyses the reaction a quinone + NADH + 5 H(+)(in) = a quinol + NAD(+) + 4 H(+)(out). In terms of biological role, NDH-1 shuttles electrons from NADH, via FMN and iron-sulfur (Fe-S) centers, to quinones in the respiratory chain. The immediate electron acceptor for the enzyme in this species is believed to be a menaquinone. Couples the redox reaction to proton translocation (for every two electrons transferred, four hydrogen ions are translocated across the cytoplasmic membrane), and thus conserves the redox energy in a proton gradient. This Mycobacterium sp. (strain JLS) protein is NADH-quinone oxidoreductase subunit B.